We begin with the raw amino-acid sequence, 181 residues long: Ribonuclease M5 (181 aa).

In terms of domain architecture, Toprim spans 5–88 (KEIIVVEGKD…IKHAYLNTKD (84 aa)). E11, D57, and D59 together coordinate Mg(2+).

This sequence belongs to the ribonuclease M5 family. The cofactor is Mg(2+).

It localises to the cytoplasm. The catalysed reaction is Endonucleolytic cleavage of RNA, removing 21 and 42 nucleotides, respectively, from the 5'- and 3'-termini of a 5S-rRNA precursor.. In terms of biological role, required for correct processing of both the 5' and 3' ends of 5S rRNA precursor. Cleaves both sides of a double-stranded region yielding mature 5S rRNA in one step. This Borreliella burgdorferi (strain ATCC 35210 / DSM 4680 / CIP 102532 / B31) (Borrelia burgdorferi) protein is Ribonuclease M5.